A 349-amino-acid chain; its full sequence is Sesquiterpene synthase MAC_05714 (349 aa).

The Mg(2+) site is built by Asp-91 and Asp-96. The DDXXXD motif signature appears at 91 to 96; that stretch reads DDLFVD. Arg-184 provides a ligand contact to substrate. The Mg(2+) site is built by Asn-230, Ser-234, and Glu-238.

Belongs to the terpene synthase family. It depends on Mg(2+) as a cofactor.

The enzyme catalyses (2E,6E)-farnesyl diphosphate + H2O = (+)-corvol ether B + diphosphate. The catalysed reaction is (2E,6E)-farnesyl diphosphate + H2O = (+)-corvol ether A + diphosphate. Its function is as follows. Terpene synthase that catalyzes the conversion of (2E,6E)-farnesyl diphosphate (FPP) into sesquiterpenes which are important for fungi-environment interactions. Produces a mixture consisting of 8 sesquiterpenes including corvol ethers A and B, as well as traces of epizonarene, gamma-cadinene, delta-cadinene, alpha-cadinene, alpha-cadinol, and an unidentified sesquiterpene. Produces both corvol ether A and corvol ether B in similar concentrations. The polypeptide is Sesquiterpene synthase MAC_05714 (Metarhizium acridum (strain CQMa 102)).